Here is a 473-residue protein sequence, read N- to C-terminus: Photosystem II CP43 reaction center protein (473 aa).

Residues 1 to 14 (MKTLYSLRRFYHVE) constitute a propeptide that is removed on maturation. Thr-15 carries the post-translational modification N-acetylthreonine. Thr-15 bears the Phosphothreonine mark. 5 consecutive transmembrane segments (helical) span residues 69–93 (LFEV…PHLA), 134–155 (LIGP…RDKN), 178–200 (KAIY…RIID), 255–275 (KPFA…LSYS), and 291–312 (WYNN…ASQS). Residue Glu-367 participates in [CaMn4O5] cluster binding. The chain crosses the membrane as a helical span at residues 447 to 471 (RARAAAAGFEKGINRENEPVLTLRP).

This sequence belongs to the PsbB/PsbC family. PsbC subfamily. PSII is composed of 1 copy each of membrane proteins PsbA, PsbB, PsbC, PsbD, PsbE, PsbF, PsbH, PsbI, PsbJ, PsbK, PsbL, PsbM, PsbT, PsbX, PsbY, PsbZ, Psb30/Ycf12, at least 3 peripheral proteins of the oxygen-evolving complex and a large number of cofactors. It forms dimeric complexes. Binds multiple chlorophylls and provides some of the ligands for the Ca-4Mn-5O cluster of the oxygen-evolving complex. It may also provide a ligand for a Cl- that is required for oxygen evolution. PSII binds additional chlorophylls, carotenoids and specific lipids. is required as a cofactor.

Its subcellular location is the plastid. The protein resides in the chloroplast thylakoid membrane. Functionally, one of the components of the core complex of photosystem II (PSII). It binds chlorophyll and helps catalyze the primary light-induced photochemical processes of PSII. PSII is a light-driven water:plastoquinone oxidoreductase, using light energy to abstract electrons from H(2)O, generating O(2) and a proton gradient subsequently used for ATP formation. This chain is Photosystem II CP43 reaction center protein, found in Guillardia theta (Cryptophyte).